Consider the following 155-residue polypeptide: DNA gyrase inhibitor (155 aa).

Belongs to the DNA gyrase inhibitor family. In terms of assembly, interacts with DNA gyrase.

It localises to the cytoplasm. Its function is as follows. Inhibits the supercoiling activity of DNA gyrase. Acts by inhibiting DNA gyrase at an early step, prior to (or at the step of) binding of DNA by the gyrase. It protects cells against toxins that target DNA gyrase, by inhibiting activity of these toxins and reducing the formation of lethal double-strand breaks in the cell. This Edwardsiella piscicida protein is DNA gyrase inhibitor.